We begin with the raw amino-acid sequence, 596 residues long: Elongation factor 4 (596 aa).

The 183-residue stretch at Lys-2–Glu-184 folds into the tr-type G domain. Residues Asp-14–Thr-19 and Asn-131–Asp-134 each bind GTP.

This sequence belongs to the TRAFAC class translation factor GTPase superfamily. Classic translation factor GTPase family. LepA subfamily.

It is found in the cell inner membrane. It catalyses the reaction GTP + H2O = GDP + phosphate + H(+). Required for accurate and efficient protein synthesis under certain stress conditions. May act as a fidelity factor of the translation reaction, by catalyzing a one-codon backward translocation of tRNAs on improperly translocated ribosomes. Back-translocation proceeds from a post-translocation (POST) complex to a pre-translocation (PRE) complex, thus giving elongation factor G a second chance to translocate the tRNAs correctly. Binds to ribosomes in a GTP-dependent manner. The polypeptide is Elongation factor 4 (Shewanella sp. (strain W3-18-1)).